The chain runs to 444 residues: Lycopaoctaene synthase (444 aa).

Residues arginine 48 and arginine 73 each coordinate NADP(+). Mg(2+)-binding residues include aspartate 76, glutamate 79, and aspartate 80. Residues arginine 215, lysine 315, and arginine 317 each coordinate NADP(+). 2 helical membrane passes run 391-411 (TAMVLAGALLIAALAYFAYVY) and 415-435 (GTSLKALPLFGVVIILAIGLF).

The protein belongs to the phytoene/squalene synthase family. The cofactor is Mg(2+).

The protein localises to the membrane. It catalyses the reaction 2 (2E,6E)-farnesyl diphosphate + NADH + H(+) = squalene + 2 diphosphate + NAD(+). It carries out the reaction 2 (2E,6E)-farnesyl diphosphate + NADPH + H(+) = squalene + 2 diphosphate + NADP(+). The enzyme catalyses 2 (2E,6E,10E)-geranylgeranyl diphosphate + NADPH + H(+) = all-trans-lycopaoctaene + 2 diphosphate + NADP(+). Converts the C20 geranylgeranyl diphosphate (GGPP) to the C40 lycopaoctaene, the first committed intermediate in the production of lycopadiene. Converts farnesyl diphosphate (FPP) into squalene, a precursor for sterol biosynthesis in eukaryotes. Converts with low efficiency the C20 phytyl diphosphate (PPP) to the C40 lycopadiene in vitro. This reaction may not have biological significance in vivo. The sequence is that of Lycopaoctaene synthase from Botryococcus braunii (Green alga).